The following is a 269-amino-acid chain: 3-deoxy-manno-octulosonate cytidylyltransferase (269 aa).

Belongs to the KdsB family.

Its subcellular location is the cytoplasm. It catalyses the reaction 3-deoxy-alpha-D-manno-oct-2-ulosonate + CTP = CMP-3-deoxy-beta-D-manno-octulosonate + diphosphate. It functions in the pathway nucleotide-sugar biosynthesis; CMP-3-deoxy-D-manno-octulosonate biosynthesis; CMP-3-deoxy-D-manno-octulosonate from 3-deoxy-D-manno-octulosonate and CTP: step 1/1. Its pathway is bacterial outer membrane biogenesis; lipopolysaccharide biosynthesis. In terms of biological role, activates KDO (a required 8-carbon sugar) for incorporation into bacterial lipopolysaccharide in Gram-negative bacteria. The protein is 3-deoxy-manno-octulosonate cytidylyltransferase of Cupriavidus pinatubonensis (strain JMP 134 / LMG 1197) (Cupriavidus necator (strain JMP 134)).